Here is a 151-residue protein sequence, read N- to C-terminus: Urease accessory protein UreE (151 aa).

Belongs to the UreE family.

It localises to the cytoplasm. Its function is as follows. Involved in urease metallocenter assembly. Binds nickel. Probably functions as a nickel donor during metallocenter assembly. The polypeptide is Urease accessory protein UreE (Lachnoclostridium phytofermentans (strain ATCC 700394 / DSM 18823 / ISDg) (Clostridium phytofermentans)).